A 391-amino-acid polypeptide reads, in one-letter code: MNIHEYQGKDILRKFGVSVPKGIVAFSPAEARQAAEQLFEEQESNVVVVKAQIHAGGRGKAGGVKLAQSPEEAYEIAGQILGATLVTHQTGPEGKEVRRLLVEEGMNIEKEFYVGITLDRATSNNVLMVSTEGGMEIEKVAEETPDKILKIQIDPLHGLLGFQARQAAFFLELDGERFKNGVKFITALYNAYVSIDASLAEINPLVVTAEGRVLALDAKINFDSNALYRHKDFLELRDTGEEDPFEVEASKSNLNYVRLDGNVGCMVNGAGLAMGTMDMIQLAGGKPANFLDVGGTASPETVTEGFKIIMSDKNVKAILVNIFGGIVRCDRVAAGVIEAAKKVGLNLPVIVRLEGTNAEAAQTMLDESGLNLISANGLRDAAEKINEALAG.

Positions 9–248 (KDILRKFGVS…TGEEDPFEVE (240 aa)) constitute an ATP-grasp domain. ATP contacts are provided by residues lysine 50, 57–59 (GRG), glutamate 103, methionine 106, and glutamate 111. Mg(2+) is bound by residues asparagine 203 and aspartate 217. Substrate contacts are provided by residues asparagine 268 and 325–327 (GIV).

This sequence belongs to the succinate/malate CoA ligase beta subunit family. In terms of assembly, heterotetramer of two alpha and two beta subunits. Requires Mg(2+) as cofactor.

The catalysed reaction is succinate + ATP + CoA = succinyl-CoA + ADP + phosphate. It carries out the reaction GTP + succinate + CoA = succinyl-CoA + GDP + phosphate. Its pathway is carbohydrate metabolism; tricarboxylic acid cycle; succinate from succinyl-CoA (ligase route): step 1/1. Functionally, succinyl-CoA synthetase functions in the citric acid cycle (TCA), coupling the hydrolysis of succinyl-CoA to the synthesis of either ATP or GTP and thus represents the only step of substrate-level phosphorylation in the TCA. The beta subunit provides nucleotide specificity of the enzyme and binds the substrate succinate, while the binding sites for coenzyme A and phosphate are found in the alpha subunit. This is Succinate--CoA ligase [ADP-forming] subunit beta from Chlorobium phaeobacteroides (strain BS1).